Reading from the N-terminus, the 386-residue chain is AT-hook motif nuclear-localized protein 8 (386 aa).

Disordered stretches follow at residues 1–175 and 303–372; these read MDSR…LGGT and KQSS…LHPH. The segment covering 54-70 has biased composition (low complexity); that stretch reads QQQSQTFHQQQQQQMDQ. Over residues 101–110 the composition is skewed to basic residues; sequence VKKKRGRPRK. The short motif at 102-110 is the Bipartite nuclear localization signal element; that stretch reads KKKRGRPRK. Positions 102 to 114 form a DNA-binding region, a.T hook 1; it reads KKKRGRPRKYTPD. Residues 126–135 show a composition bias toward polar residues; sequence PLLSAASNSY. A compositionally biased stretch (gly residues) spans 136 to 147; it reads GEGGVGDSGGNG. The a.T hook 2 DNA-binding region spans 155–167; that stretch reads KRNRGRPPGSSKK. Positions 174 to 316 constitute a PPC domain; it reads GTSGVGFTPH…VNIARGQNPE (143 aa). Low complexity-rich tracts occupy residues 328–337 and 361–372; these read GSVSQGPSSE and QQQQQQQPLHPH.

It localises to the nucleus. Functionally, transcription factor that specifically binds AT-rich DNA sequences related to the nuclear matrix attachment regions (MARs). The protein is AT-hook motif nuclear-localized protein 8 of Arabidopsis thaliana (Mouse-ear cress).